A 582-amino-acid polypeptide reads, in one-letter code: Arginine--tRNA ligase (582 aa).

The 'HIGH' region motif lies at Ala136–His146.

The protein belongs to the class-I aminoacyl-tRNA synthetase family. As to quaternary structure, monomer.

The protein localises to the cytoplasm. It catalyses the reaction tRNA(Arg) + L-arginine + ATP = L-arginyl-tRNA(Arg) + AMP + diphosphate. The protein is Arginine--tRNA ligase of Novosphingobium aromaticivorans (strain ATCC 700278 / DSM 12444 / CCUG 56034 / CIP 105152 / NBRC 16084 / F199).